We begin with the raw amino-acid sequence, 209 residues long: D-aminoacyl-tRNA deacylase 1 (209 aa).

The Gly-cisPro motif, important for rejection of L-amino acids signature appears at 139–140; that stretch reads GP. Positions 142–209 are disordered; the sequence is TIELESPAPG…EGDVSSEREP (68 aa). 2 stretches are compositionally biased toward basic and acidic residues: residues 159 to 170 and 181 to 194; these read QLSKLEKQQQRK and SSKE…EDRS. Phosphoserine occurs at positions 197, 204, and 205.

It belongs to the DTD family. Homodimer. Interacts with CDC45 and TOPBP1. Post-translationally, preferentially phosphorylated in cells arrested early in S phase. Phosphorylation in the C-terminus weakens the interaction with CDC45.

The protein localises to the nucleus. The protein resides in the cytoplasm. The enzyme catalyses glycyl-tRNA(Ala) + H2O = tRNA(Ala) + glycine + H(+). It carries out the reaction a D-aminoacyl-tRNA + H2O = a tRNA + a D-alpha-amino acid + H(+). An aminoacyl-tRNA editing enzyme that deacylates mischarged D-aminoacyl-tRNAs. Also deacylates mischarged glycyl-tRNA(Ala), protecting cells against glycine mischarging by AlaRS. Acts via tRNA-based rather than protein-based catalysis; rejects L-amino acids rather than detecting D-amino acids in the active site. By recycling D-aminoacyl-tRNA to D-amino acids and free tRNA molecules, this enzyme counteracts the toxicity associated with the formation of D-aminoacyl-tRNA entities in vivo and helps enforce protein L-homochirality. Its function is as follows. ATPase involved in DNA replication, may facilitate loading of CDC45 onto pre-replication complexes. In Mus musculus (Mouse), this protein is D-aminoacyl-tRNA deacylase 1 (Dtd1).